Reading from the N-terminus, the 373-residue chain is Erythronate-4-phosphate dehydrogenase (373 aa).

Residues Ser-45 and Thr-66 each coordinate substrate. 2 residues coordinate NAD(+): Asp-146 and Thr-175. The active site involves Arg-208. Residue Asp-232 coordinates NAD(+). The active site involves Glu-237. Catalysis depends on His-254, which acts as the Proton donor. Gly-257 is an NAD(+) binding site. Position 258 (Tyr-258) interacts with substrate.

The protein belongs to the D-isomer specific 2-hydroxyacid dehydrogenase family. PdxB subfamily. As to quaternary structure, homodimer.

It is found in the cytoplasm. It catalyses the reaction 4-phospho-D-erythronate + NAD(+) = (R)-3-hydroxy-2-oxo-4-phosphooxybutanoate + NADH + H(+). It functions in the pathway cofactor biosynthesis; pyridoxine 5'-phosphate biosynthesis; pyridoxine 5'-phosphate from D-erythrose 4-phosphate: step 2/5. Its function is as follows. Catalyzes the oxidation of erythronate-4-phosphate to 3-hydroxy-2-oxo-4-phosphonooxybutanoate. In Serratia proteamaculans (strain 568), this protein is Erythronate-4-phosphate dehydrogenase.